Here is a 265-residue protein sequence, read N- to C-terminus: Neuronal membrane glycoprotein M6-b (265 aa).

A helical transmembrane segment spans residues 31–51 (GGVPYASLVATILCFSGVALF). Asn73 carries N-linked (GlcNAc...) asparagine glycosylation. 2 helical membrane passes run 90–110 (VIYGIASFFFLYGIILLAEGF) and 136–156 (FVFLTYVLGVAWLGVFGFSAV). Asn177 carries an N-linked (GlcNAc...) asparagine glycan. The chain crosses the membrane as a helical span at residues 224–244 (LFIVACAGAGATVIALLIYMM). A Phosphoserine modification is found at Ser257.

This sequence belongs to the myelin proteolipid protein family. As to quaternary structure, interacts with SERT. As to expression, highly expressed in the ventral medullary surface, moderately in the cerebral cortex and cerebellum, poorly in lung and kidney, and not at all in heart, skeletal muscle, liver, stomach or stomach.

The protein resides in the membrane. It localises to the cell membrane. Functionally, may be involved in neural development. Involved in regulation of osteoblast function and bone formation. Involved in matrix vesicle release by osteoblasts; this function seems to involve maintenance of the actin cytoskeleton. May be involved in cellular trafficking of SERT and thereby in regulation of serotonin uptake. The chain is Neuronal membrane glycoprotein M6-b (Gpm6b) from Rattus norvegicus (Rat).